A 183-amino-acid polypeptide reads, in one-letter code: MLLEETLKSCPIVKRGKYHYFIHPISDGVPLVEPKLLREVATRIIKIGNFEGVNKIVTAEAMGIPLVTTLSLYTDIPYVIMRKREYKLPGEVPVFQSTGYSKGQLYLNGIEKGDKVIIIDDVISTGGTMIAIINALERAGAEIKDIICVIERGDGKKIVEEKTGYKIKTLVKIDVVDGEVVIL.

It belongs to the purine/pyrimidine phosphoribosyltransferase family. Archaeal HPRT subfamily. Homodimer.

It localises to the cytoplasm. The enzyme catalyses IMP + diphosphate = hypoxanthine + 5-phospho-alpha-D-ribose 1-diphosphate. The catalysed reaction is GMP + diphosphate = guanine + 5-phospho-alpha-D-ribose 1-diphosphate. It participates in purine metabolism; IMP biosynthesis via salvage pathway; IMP from hypoxanthine: step 1/1. In terms of biological role, catalyzes a salvage reaction resulting in the formation of IMP that is energically less costly than de novo synthesis. This chain is Hypoxanthine/guanine phosphoribosyltransferase, found in Methanocaldococcus vulcanius (strain ATCC 700851 / DSM 12094 / M7) (Methanococcus vulcanius).